Consider the following 218-residue polypeptide: Ribulose-phosphate 3-epimerase (218 aa).

Substrate is bound at residue serine 10. A divalent metal cation contacts are provided by histidine 35, aspartate 37, and histidine 68. Catalysis depends on aspartate 37, which acts as the Proton acceptor. Residues histidine 68, 144–147 (GFSG), 177–179 (DGG), and 199–200 (GS) each bind substrate. Aspartate 177 provides a ligand contact to a divalent metal cation. Aspartate 177 acts as the Proton donor in catalysis.

Belongs to the ribulose-phosphate 3-epimerase family. Requires a divalent metal cation as cofactor.

It carries out the reaction D-ribulose 5-phosphate = D-xylulose 5-phosphate. It functions in the pathway carbohydrate degradation. Its function is as follows. Catalyzes the reversible epimerization of D-ribulose 5-phosphate to D-xylulose 5-phosphate. The sequence is that of Ribulose-phosphate 3-epimerase from Treponema pallidum (strain Nichols).